The primary structure comprises 197 residues: Imidazoleglycerol-phosphate dehydratase (197 aa).

Belongs to the imidazoleglycerol-phosphate dehydratase family.

Its subcellular location is the cytoplasm. The catalysed reaction is D-erythro-1-(imidazol-4-yl)glycerol 3-phosphate = 3-(imidazol-4-yl)-2-oxopropyl phosphate + H2O. Its pathway is amino-acid biosynthesis; L-histidine biosynthesis; L-histidine from 5-phospho-alpha-D-ribose 1-diphosphate: step 6/9. In Erythrobacter litoralis (strain HTCC2594), this protein is Imidazoleglycerol-phosphate dehydratase.